A 111-amino-acid polypeptide reads, in one-letter code: Stress-response A/B barrel domain-containing protein At5g22580 (111 aa).

In terms of domain architecture, Stress-response A/B barrel spans 6-98 (FKHLVVVKFK…VIDKIVLLDF (93 aa)). The Mg(2+) site is built by V31, I34, D35, and V37.

Homodimer. The cofactor is Mg(2+).

Its function is as follows. Involved in stress response. This chain is Stress-response A/B barrel domain-containing protein At5g22580, found in Arabidopsis thaliana (Mouse-ear cress).